The following is a 321-amino-acid chain: Glucokinase (321 aa).

8–13 serves as a coordination point for ATP; that stretch reads GDVGGT.

It belongs to the bacterial glucokinase family.

The protein resides in the cytoplasm. It carries out the reaction D-glucose + ATP = D-glucose 6-phosphate + ADP + H(+). The sequence is that of Glucokinase from Tolumonas auensis (strain DSM 9187 / NBRC 110442 / TA 4).